Here is a 1741-residue protein sequence, read N- to C-terminus: Meiosis regulator and mRNA stability factor 1 (1741 aa).

Residues 345-482 (IGVFWDIENC…ALLHHAHELV (138 aa)) enclose the NYN domain. 3 disordered regions span residues 594–636 (KVKS…GSVI), 659–678 (TENH…SHAA), and 683–716 (LTTK…PVDK). Over residues 659-668 (TENHQEHLRE) the composition is skewed to basic and acidic residues. Residues 788 to 867 (ADIQISNIDY…KRIQVSLATG (80 aa)) enclose the RRM domain. 8 consecutive HTH OST-type domains span residues 872–946 (SLSL…SPLG), 1000–1076 (SLKT…HNKP), 1097–1171 (QLIQ…LTHR), 1173–1248 (QVKR…IPKR), 1257–1332 (RTKQ…TEVE), 1333–1408 (QVKA…INRK), 1409–1483 (SLRT…VRLT), and 1484–1558 (NLYM…LKND). The span at 1684-1700 (KLTSGSVASSTAENTSV) shows a compositional bias: polar residues. Positions 1684–1727 (KLTSGSVASSTAENTSVPPRHSSETQLNKEAMDSPAKKQHKNKV) are disordered.

Its subcellular location is the peroxisome. In terms of biological role, essential regulator of oogenesis required for female meiotic progression to repress transposable elements and preventing their mobilization, which is essential for the germline integrity. This Gallus gallus (Chicken) protein is Meiosis regulator and mRNA stability factor 1.